The sequence spans 1586 residues: METSASATASEKQEAKSGILEAAGFPDPGKKASPLVVAAAAAAAVAAQGVPQHLLPPFHAPLPIDMRHQEGRYHYEPHSVHGVHGPPALSGSPVISDISLIRLSPHPAGPGESPFNAPHPYVNPHMEHYLRSVHSSPTLSMISAARGLSPADVAQEHLKERGLFGLPAPGTTPSDYYHQMTLVAGHPAPYGDLLMQSGGAASAPHLHDYLNPVDVSRFSSPRVTPRLSRKRALSISPLSDASLDLQRMIRTSPNSLVAYINNSRSSSAASGSYGHLSAGALSPAFTFPHPINPVAYQQILSQQRGLGSAFGHTPPLIQPSPTFLAQQPMALTSINATPTQLSSSSNCLSDTNQNKQSSESAVSSTVNPVAIHKRSKVKTEPEGLRPASPLALTQGQVSGHGSCGCALPLSQEQLADLKEDLDRDDCKQEAEVVIYETNCHWEDCTKEYDTQEQLVHHINNEHIHGEKKEFVCRWQACTREQKPFKAQYMLVVHMRRHTGEKPHKCTFEGCSKAYSRLENLKTHLRSHTGEKPYVCEHEGCNKAFSNASDRAKHQNRTHSNEKPYICKIPGCTKRYTDPSSLRKHVKTVHGPDAHVTKKQRNDVHLRTPLLKENGDSEAGTEPGGPESTEASSTSQAVEDCLHVRAIKTESSGLCQSSPGAQSSCSSEPSPLGSAPNNDSGVEMPGTGPGSLGDLTALDDTPPGADTSALAAPSAGGLQLRKHMTTMHRFEQLKKEKLKSLKDSCSWAGPTPHTRNTKLPPLPGSGSILENFSGSGGGGPAGLLPNPRLSELSASEVTMLSQLQERRDSSTSTVSSAYTVSRRSSGISPYFSSRRSSEASPLGAGRPHNASSADSYDPISTDASRRSSEASQCSGGSGLLNLTPAQQYSLRAKYAAATGGPPPTPLPGLERMSLRTRLALLDAPERTLPAGCPRPLGPRRGSDGPTYGHGHAGAAPAFPHEAPGGGARRASDPVRRPDALSLPRVQRFHSTHNVNPGPLPPCADRRGLRLQSHPSTDGGLARGAYSPRPPSISENVAMEAVAAGVDGAGPEADLGLPEDDLVLPDDVVQYIKAHASGALDEGTGQVYPTESTGFSDNPRLPSPGLHGQRRMVAADSNVGPSAPMLGGCQLGFGAPSSLNKNNMPVQWNEVSSGTVDALASQVKPPPFPQGNLAVVQQKPAFGQYPGYSPQGLQASPGGLDSTQPHLQPRSGAPSQGIPRVNYMQQLRQPVAGSQCPGMTTTMSPHACYGQVHPQLSPSTISGALNQFPQSCSNMPAKPGHLGHPQQTEVAPDPTTMGNRHRELGVPDSALAGVPPPHPVQSYPQQSHHLAASMSQEGYHQVPSLLPARQPGFMEPQTGPMGVATAGFGLVQPRPPLEPSPTGRHRGVRAVQQQLAYARATGHAMAAMPSSQETAEAVPKGAMGNMGSVPPQPPPQDAGGAPDHSMLYYYGQIHMYEQDGGLENLGSCQVMRSQPPQPQACQDSIQPQPLPSPGVNQVSSTVDSQLLEAPQIDFDAIMDDGDHSSLFSGALSPSLLHSLSQNSSRLTTPRNSLTLPSIPAGISNMAVGDMSSMLTSLAEESKFLNMMT.

Residues 1 to 10 (METSASATAS) are compositionally biased toward polar residues. The segment at 1 to 22 (METSASATASEKQEAKSGILEA) is disordered. Residue Val50 forms a Glycyl lysine isopeptide (Lys-Gly) (interchain with G-Cter in SUMO2) linkage. 4 positions are modified to phosphoserine: Ser149, Ser234, Ser236, and Ser242. The segment covering 342–367 (SSSSNCLSDTNQNKQSSESAVSSTVN) has biased composition (polar residues). The interval 342–389 (SSSSNCLSDTNQNKQSSESAVSSTVNPVAIHKRSKVKTEPEGLRPASP) is disordered. Ser388 bears the Phosphoserine; by DYRK2 mark. The C2H2-type 1 zinc finger occupies 437–464 (TNCHWEDCTKEYDTQEQLVHHINNEHIH). The C2H2-type 2; degenerate zinc finger occupies 475 to 497 (QACTREQKPFKAQYMLVVHMRRH). C2H2-type zinc fingers lie at residues 503-527 (HKCTFEGCSKAYSRLENLKTHLRSH), 533-558 (YVCEHEGCNKAFSNASDRAKHQNRTH), and 564-589 (YICKIPGCTKRYTDPSSLRKHVKTVH). Disordered stretches follow at residues 577-636 (DPSS…TSQA) and 650-716 (SSGL…SAGG). Basic and acidic residues predominate over residues 589–605 (HGPDAHVTKKQRNDVHL). Low complexity predominate over residues 654-674 (CQSSPGAQSSCSSEPSPLGSA). Thr725 carries the post-translational modification Phosphothreonine. 5 disordered regions span residues 742–879 (DSCS…SGLL), 925–1030 (RTLP…RPPS), 1182–1215 (QYPGYSPQGLQASPGGLDSTQPHLQPRSGAPSQG), 1421–1441 (MGNMGSVPPQPPPQDAGGAPD), and 1469–1498 (MRSQPPQPQACQDSIQPQPLPSPGVNQVSS). At Lys757 the chain carries N6-acetyllysine; by EP300. Polar residues predominate over residues 791–802 (LSASEVTMLSQL). Composition is skewed to low complexity over residues 809–824 (STSTVSSAYTVSRRSS) and 947–961 (GHGHAGAAPAFPHEA). Residues 968–977 (RASDPVRRPD) show a composition bias toward basic and acidic residues. Ser1011 is subject to Phosphoserine; by DYRK2. The span at 1469 to 1485 (MRSQPPQPQACQDSIQP) shows a compositional bias: polar residues.

It belongs to the GLI C2H2-type zinc-finger protein family. Interaction with ZIC1 and ZIC2. Interacts with STK36. Interacts with SUFU; this inhibits transcriptional activation mediated by GLI2. Interacts (via C-terminal internal region) with FOXC1 (via N-terminus); this interaction is direct and increases GLI2 DNA-binding and transcriptional activity through a smoothened (SMO)-independent Hedgehog (Hh) signaling pathway. Phosphorylated in vitro by ULK3. Phosphorylated by DYRK2; this inhibits GLI2 transcription factor activity and promotes proteasomal degradation of GLI2. In terms of processing, acetylation at Lys-757 inhibits Hh target gene expression, probably by impeding entry into chromatin thus preventing promoter occupancy. As to expression, expressed in breast cancers (at protein level). Isoform 1 and isoform 4 are expressed in HTLV-1-infected T-cell lines (at protein level). Isoform 1 and isoform 2 are strongly expressed in HTLV-1-infected T-cell lines. Isoform 3 and isoform 4 are weakly expressed in HTLV-1-infected T-cell lines.

The protein localises to the nucleus. It localises to the cytoplasm. Its subcellular location is the cell projection. The protein resides in the cilium. In terms of biological role, functions as a transcription regulator in the hedgehog (Hh) pathway. Functions as a transcriptional activator. May also function as transcriptional repressor. Requires STK36 for full transcriptional activator activity. Required for normal embryonic development. Its function is as follows. Involved in the smoothened (SHH) signaling pathway. Functionally, acts as a transcriptional activator in T-cell leukemia virus type 1 (HTLV-1)-infected cells in a Tax-dependent manner. Binds to the DNA sequence 5'-GAACCACCCA-3' which is part of the Tax-responsive element (TRE-2S) regulatory element that augments the Tax-dependent enhancer of HTLV-1. (Microbial infection) Acts as a transcriptional activators in T-cell leukemia virus type 1 (HTLV-1)-infected cells in a Tax-dependent manner. Binds to the DNA sequence 5'-GAACCACCCA-3' which is part of the Tax-responsive element (TRE-2S) regulatory element that augments the Tax-dependent enhancer of HTLV-1. In terms of biological role, acts as a transcriptional repressor. The chain is Zinc finger protein GLI2 from Homo sapiens (Human).